A 274-amino-acid chain; its full sequence is Envelope glycoprotein L (274 aa).

The first 21 residues, 1-21, serve as a signal peptide directing secretion; sequence MMPLLLLILLSTRNLLGAAQS. A gL betaherpesvirus-type domain is found at 51–251; it reads VEHKCREALA…RSYRDRFPAV (201 aa). Residues Cys-156 and Cys-161 are joined by a disulfide bond.

Belongs to the herpesviridae glycoprotein L (gL) family. Betaherpesvirinae gL subfamily. As to quaternary structure, interacts with glycoprotein H (gH); this interaction is necessary for the correct processing and cell surface expression of gH.

Its subcellular location is the virion membrane. The protein localises to the host cell membrane. The protein resides in the host Golgi apparatus. It is found in the host trans-Golgi network. The heterodimer glycoprotein H-glycoprotein L is required for the fusion of viral and plasma membranes leading to virus entry into the host cell. Acts as a functional inhibitor of gH and maintains gH in an inhibited form. Upon binding to host integrins, gL dissociates from gH leading to activation of the viral fusion glycoproteins gB and gH. The protein is Envelope glycoprotein L of Murid herpesvirus 1 (strain Smith) (MuHV-1).